A 578-amino-acid chain; its full sequence is Peptidyl-prolyl cis-trans isomerase-like 2 (578 aa).

Residues 40–114 (RRLPFNFCAA…SDSLGAGLSD (75 aa)) enclose the U-box domain. The disordered stretch occupies residues 240 to 260 (KAREQGGDVNRSSTALTKPTG). Residues 321 to 475 (ATGFARMETN…NKILIKDIVI (155 aa)) enclose the PPIase cyclophilin-type domain. Residues 505–578 (GTDDDKTTWT…GGGFGNFDNW (74 aa)) are disordered. Residues 538 to 548 (KTTTQQSTPTV) are compositionally biased toward polar residues. The segment covering 551–560 (ADLEDVDTWE) has biased composition (acidic residues). Gly residues predominate over residues 569–578 (GGGFGNFDNW).

It belongs to the cyclophilin-type PPIase family. PPIL2 subfamily.

It is found in the nucleus. It catalyses the reaction [protein]-peptidylproline (omega=180) = [protein]-peptidylproline (omega=0). The enzyme catalyses S-ubiquitinyl-[E2 ubiquitin-conjugating enzyme]-L-cysteine + [acceptor protein]-L-lysine = [E2 ubiquitin-conjugating enzyme]-L-cysteine + N(6)-ubiquitinyl-[acceptor protein]-L-lysine.. It functions in the pathway protein modification; protein ubiquitination. Its function is as follows. May catalyze the cis-trans isomerization of proline imidic peptide bonds in oligopeptides thereby assisting the folding of proteins. May also function as a chaperone, playing a role in intracellular transport of proteins. May also have a protein ubiquitin ligase activity acting as an E3 ubiquitin protein ligase or as a ubiquitin-ubiquitin ligase promoting elongation of ubiquitin chains on proteins. The protein is Peptidyl-prolyl cis-trans isomerase-like 2 (CYP8) of Gibberella zeae (strain ATCC MYA-4620 / CBS 123657 / FGSC 9075 / NRRL 31084 / PH-1) (Wheat head blight fungus).